Reading from the N-terminus, the 110-residue chain is DNA-directed RNA polymerase subunit omega (110 aa).

The protein belongs to the RNA polymerase subunit omega family. As to quaternary structure, the RNAP catalytic core consists of 2 alpha, 1 beta, 1 beta' and 1 omega subunit. When a sigma factor is associated with the core the holoenzyme is formed, which can initiate transcription.

It carries out the reaction RNA(n) + a ribonucleoside 5'-triphosphate = RNA(n+1) + diphosphate. Its function is as follows. Promotes RNA polymerase assembly. Latches the N- and C-terminal regions of the beta' subunit thereby facilitating its interaction with the beta and alpha subunits. This chain is DNA-directed RNA polymerase subunit omega, found in Vesicomyosocius okutanii subsp. Calyptogena okutanii (strain HA).